A 237-amino-acid polypeptide reads, in one-letter code: Zinc finger protein 22 (237 aa).

Residues 1–33 (MRLGKPKGGISRSASQGKTYESKRKTARQRQKW) form a disordered region. N6-acetyllysine is present on residues K18 and K23. 5 C2H2-type zinc fingers span residues 55 to 82 (YKCTKCSKSFSQSSTLFQHKKIHTGKKS), 83 to 110 (HKCADCGKSFFQSSNLIQHRRIHTGEKP), 111 to 138 (YKCDECGERFKQSSNLIQHQRIHTGEKP), 139 to 166 (YCCDECGRCFSQSSHLIQHQRTHTGEKP), and 167 to 194 (YQCEECDKCFSQSSHLRQHMKVHKEKKS). Residues 188–217 (VHKEKKSHKRGKNARAKTHPVSWKRGKGRK) are compositionally biased toward basic residues. Residues 188-218 (VHKEKKSHKRGKNARAKTHPVSWKRGKGRKA) are disordered.

Belongs to the krueppel C2H2-type zinc-finger protein family. Highly expressed in the ameloblast layer of mandibular incisors, moderately expressed in submandibular gland, calvaria, kidney and lung, and expressed at low levels in brain and thymus.

The protein localises to the nucleus. In terms of biological role, binds DNA through the consensus sequence 5'-CAATG-3'. May be involved in transcriptional regulation and may play a role in tooth formation. This chain is Zinc finger protein 22 (Znf22), found in Rattus norvegicus (Rat).